We begin with the raw amino-acid sequence, 462 residues long: UDP-N-acetylmuramate--L-alanine ligase (462 aa).

Residue 114-120 participates in ATP binding; sequence GSHGKTT.

This sequence belongs to the MurCDEF family.

It localises to the cytoplasm. The catalysed reaction is UDP-N-acetyl-alpha-D-muramate + L-alanine + ATP = UDP-N-acetyl-alpha-D-muramoyl-L-alanine + ADP + phosphate + H(+). It functions in the pathway cell wall biogenesis; peptidoglycan biosynthesis. Cell wall formation. The sequence is that of UDP-N-acetylmuramate--L-alanine ligase from Brachyspira hyodysenteriae (strain ATCC 49526 / WA1).